A 208-amino-acid chain; its full sequence is Uracil phosphoribosyltransferase (208 aa).

5-phospho-alpha-D-ribose 1-diphosphate contacts are provided by residues Arg78, Arg103, and Asp130 to Thr138. Residues Ile193 and Gly198 to Ala200 each bind uracil. Asp199 is a binding site for 5-phospho-alpha-D-ribose 1-diphosphate.

The protein belongs to the UPRTase family. It depends on Mg(2+) as a cofactor.

It carries out the reaction UMP + diphosphate = 5-phospho-alpha-D-ribose 1-diphosphate + uracil. The protein operates within pyrimidine metabolism; UMP biosynthesis via salvage pathway; UMP from uracil: step 1/1. Allosterically activated by GTP. Functionally, catalyzes the conversion of uracil and 5-phospho-alpha-D-ribose 1-diphosphate (PRPP) to UMP and diphosphate. The chain is Uracil phosphoribosyltransferase from Maridesulfovibrio salexigens (strain ATCC 14822 / DSM 2638 / NCIMB 8403 / VKM B-1763) (Desulfovibrio salexigens).